Here is a 539-residue protein sequence, read N- to C-terminus: MYLSRFLSIHALWVTVSSVMQPYLFVWGHYDVCKSLIYTEEGKVWDYTACQPESTDMTKYLKVKLDPPDITCGDPPESFCAMGNPYMCNNECDASTPELAHPPELMFDFEGRHPSTFWQSATWKEYPKPLQVNITLSWSKTIELTDNIVITFESGRPDQMILEKSLDYGRTWQPYQYYATDCLHAFHMDPKSVKDLSQHTVLEIICTEEYSTGYSTNSKIIHFEIKDRFAFFAGPRLRNMASLYGQLDTTKKLRDFFTVTDLRIRLLRPAVGEIFVDELHLARYFYAISDIKVRGRCKCNLHATSCLYDNSKLTCECEHNTTGPDCGKCKKNYQGRPWSPGSYLPIPKGTANTCIPSISSIGNCECFGHSNRCSYIDLLNTVICVSCKHNTRGQHCELCRLGYFRNASAQLDDENVCIECYCNPLGSIHDRCNGSGFCECKTGTTGPKCDECLPGNSWYYGCQPNVCDNELLHCQNGGTCQNNVRCACPDAYTGILCEKLRCEEAGSCGSESGQGAPPRGSPALLLLTMLLGTAGPLVF.

Positions 1–18 (MYLSRFLSIHALWVTVSS) are cleaved as a signal peptide. 3 cysteine pairs are disulfide-bonded: C33/C50, C72/C92, and C80/C88. Residues 46–296 (DYTACQPEST…AISDIKVRGR (251 aa)) form the Laminin N-terminal domain. The segment at 80-91 (CAMGNPYMCNNE) is NGL discriminant loop I. N133 carries an N-linked (GlcNAc...) asparagine glycan. A disulfide bond links C182 and C206. The interval 208 to 214 (EEYSTGY) is NGL discriminant loop II. The segment at 273–275 (EIF) is NGL discriminant loop III. 13 disulfide bridges follow: C297/C306, C299/C315, C317/C326, C329/C354, C364/C373, C366/C384, C387/C396, C399/C417, C420/C432, C422/C438, C440/C449, C452/C462, and C488/C497. Laminin EGF-like domains follow at residues 297 to 356 (CKCN…TCIP), 364 to 419 (CECF…VCIE), and 420 to 469 (CYCN…VCDN). N320 carries an N-linked (GlcNAc...) asparagine glycan. N406 carries N-linked (GlcNAc...) asparagine glycosylation. N433 carries N-linked (GlcNAc...) asparagine glycosylation. S510 carries the GPI-anchor amidated serine lipid modification. The propeptide at 511 to 539 (ESGQGAPPRGSPALLLLTMLLGTAGPLVF) is removed in mature form.

N-glycosylated. In terms of tissue distribution, expression is restricted primarily to neurons of the CNS, particularly in the dorsal thalamus, olfactory bulb and inferior colliculus. Isoform 1A and isoform 1D are the major products in adult brain.

The protein localises to the cell membrane. Involved in controlling patterning and neuronal circuit formation at the laminar, cellular, subcellular and synaptic levels. Promotes neurite outgrowth of both axons and dendrites. The protein is Netrin-G1 (Ntng1) of Mus musculus (Mouse).